The chain runs to 122 residues: MIQQESRLKVADNTGAKEILTIRVLGGSGRRYAGIGDTIVATVKDAIPGGNVKKAHVVKAVVVRTRKQSRRPDGSYIKFDENAAVILKTDGEPRGTRIFGPVGRELRDKKFMKIVSLAPEVI.

Belongs to the universal ribosomal protein uL14 family. In terms of assembly, part of the 50S ribosomal subunit. Forms a cluster with proteins L3 and L19. In the 70S ribosome, L14 and L19 interact and together make contacts with the 16S rRNA in bridges B5 and B8.

Functionally, binds to 23S rRNA. Forms part of two intersubunit bridges in the 70S ribosome. The polypeptide is Large ribosomal subunit protein uL14 (Micrococcus luteus (Micrococcus lysodeikticus)).